The primary structure comprises 276 residues: Diaminopimelate epimerase (276 aa).

Substrate is bound by residues N13, Q46, and N66. The active-site Proton donor is the C75. Substrate is bound by residues 76 to 77, N159, N192, and 210 to 211; these read GN and ER. C219 functions as the Proton acceptor in the catalytic mechanism. 220 to 221 is a substrate binding site; it reads GT.

It belongs to the diaminopimelate epimerase family. As to quaternary structure, homodimer.

The protein resides in the cytoplasm. The catalysed reaction is (2S,6S)-2,6-diaminopimelate = meso-2,6-diaminopimelate. The protein operates within amino-acid biosynthesis; L-lysine biosynthesis via DAP pathway; DL-2,6-diaminopimelate from LL-2,6-diaminopimelate: step 1/1. Its function is as follows. Catalyzes the stereoinversion of LL-2,6-diaminopimelate (L,L-DAP) to meso-diaminopimelate (meso-DAP), a precursor of L-lysine and an essential component of the bacterial peptidoglycan. This chain is Diaminopimelate epimerase, found in Hahella chejuensis (strain KCTC 2396).